We begin with the raw amino-acid sequence, 139 residues long: Envelope glycoprotein N (139 aa).

Over 1 to 100 (MACGKTESGD…CHSHFYGLSV (100 aa)) the chain is Virion surface. A helical membrane pass occupies residues 101–121 (SSFASIWMMVNAIVFICAFGV). At 122–139 (FMRHWCYKAFTSDTAKGY) the chain is on the intravirion side.

It belongs to the herpesviridae glycoprotein N family. In terms of assembly, interacts (via N-terminus) with gM (via N-terminus). The gM-gN heterodimer forms the gCII complex.

Its subcellular location is the virion membrane. The protein localises to the host membrane. The protein resides in the host Golgi apparatus. It localises to the host trans-Golgi network. Functionally, envelope glycoprotein necessary for proper maturation of gM and modulation of its membrane fusion activity. Also plays a critical role in virion morphogenesis. In Mus musculus (Mouse), this protein is Envelope glycoprotein N.